A 299-amino-acid polypeptide reads, in one-letter code: Pentalenolactone F synthase (299 aa).

Fe cation-binding residues include His105 and Asp107. Positions 133 and 251 each coordinate 2-oxoglutarate. A Fe cation-binding site is contributed by His266. Position 277 (Arg277) interacts with 2-oxoglutarate.

The protein belongs to the TfdA dioxygenase family. Requires Fe(2+) as cofactor.

The catalysed reaction is pentalenolactone D + 2 2-oxoglutarate + 2 O2 = pentalenolactone F + 2 succinate + 2 CO2 + H2O. The protein operates within antibiotic biosynthesis; pentalenolactone biosynthesis. With respect to regulation, activated by ascorbate. Functionally, catalyzes the Fe(2+) and alpha-ketoglutarate-dependent oxidation of pentalenolactone D to pentalenolactone F in the biosynthesis of pentalenolactone antibiotic. Also able to catalyze the oxidation of pentalenolactone D to pentalenolactone E. The protein is Pentalenolactone F synthase (pntD) of Streptomyces arenae.